A 123-amino-acid polypeptide reads, in one-letter code: DPEP2 neighbor protein (123 aa).

Residues 67 to 123 are disordered; it reads APLATPTKAEAEKPAPRRAPKRRQATIESDKDLGCSSPKIRRLEHRGRRLTPQKLAG. The span at 105–117 shows a compositional bias: basic residues; that stretch reads KIRRLEHRGRRLT.

The sequence is that of DPEP2 neighbor protein from Homo sapiens (Human).